The sequence spans 476 residues: Cysteine--tRNA ligase (476 aa).

Cysteine 28 provides a ligand contact to Zn(2+). The short motif at 30–40 is the 'HIGH' region element; the sequence is PTVYDHTHLGH. Residues cysteine 208, histidine 233, and glutamate 237 each coordinate Zn(2+). The short motif at 265-269 is the 'KMSKS' region element; it reads KMSKS. Residue lysine 268 participates in ATP binding.

The protein belongs to the class-I aminoacyl-tRNA synthetase family. The cofactor is Zn(2+).

It is found in the cytoplasm. The catalysed reaction is tRNA(Cys) + L-cysteine + ATP = L-cysteinyl-tRNA(Cys) + AMP + diphosphate. This is Cysteine--tRNA ligase from Methanococcus maripaludis (strain C6 / ATCC BAA-1332).